Reading from the N-terminus, the 86-residue chain is IDINNGENIFTANCSACHAGGNNVIMPEKTLKKDALADNKMVSVNAITYQVTNGKNAMPAFGSRLAETDIEDVANFVLTQSDKGWD.

Heme c contacts are provided by C14, C17, H18, and M58.

Belongs to the cytochrome c family. PetJ subfamily. In terms of assembly, monomer. Binds 1 heme c group covalently per subunit.

The protein localises to the plastid. The protein resides in the chloroplast thylakoid lumen. Functions as an electron carrier between membrane-bound cytochrome b6-f and photosystem I in oxygenic photosynthesis. This chain is Cytochrome c6 (petJ), found in Alaria esculenta (Irish wakame).